Here is a 222-residue protein sequence, read N- to C-terminus: Riboflavin kinase (222 aa).

A unknown region spans residues methionine 1–glycine 92. The segment at tyrosine 93–aspartate 222 is riboflavin kinase. A CDP-binding site is contributed by glycine 102 to arginine 107. Residues threonine 131 and asparagine 133 each contribute to the Mg(2+) site. FMN contacts are provided by threonine 188 and glutamate 196. Cysteine 201–arginine 204 contributes to the CDP binding site.

This sequence belongs to the archaeal riboflavin kinase family. Requires Mg(2+) as cofactor.

The enzyme catalyses riboflavin + CTP = CDP + FMN + H(+). Its pathway is cofactor biosynthesis; FMN biosynthesis; FMN from riboflavin (CTP route): step 1/1. Functionally, catalyzes the CTP-dependent phosphorylation of riboflavin (vitamin B2) to form flavin mononucleotide (FMN). The chain is Riboflavin kinase (ribK) from Methanoculleus marisnigri (strain ATCC 35101 / DSM 1498 / JR1).